Reading from the N-terminus, the 559-residue chain is T-complex protein 1 subunit gamma (559 aa).

A disulfide bridge links Cys-368 with Cys-374. Residues 531-559 form a disordered region; the sequence is KDKRGGAGQRGGDRGQGDQEETFGDQRDG.

Belongs to the TCP-1 chaperonin family. In terms of assembly, heterooligomeric complex of about 850 to 900 kDa that forms two stacked rings, 12 to 16 nm in diameter.

It is found in the cytoplasm. In terms of biological role, molecular chaperone; assists the folding of proteins upon ATP hydrolysis. Known to play a role, in vitro, in the folding of actin and tubulin. The polypeptide is T-complex protein 1 subunit gamma (Oxytricha granulifera (Ciliate)).